Reading from the N-terminus, the 1036-residue chain is uncharacterized protein (1036 aa).

This is an uncharacterized protein from Schizosaccharomyces pombe (strain 972 / ATCC 24843) (Fission yeast).